The sequence spans 657 residues: N-acetylgalactosaminyltransferase 7 (657 aa).

The Cytoplasmic segment spans residues 1 to 6; sequence MRLKIG. A helical; Signal-anchor for type II membrane protein membrane pass occupies residues 7-29; the sequence is FILRSLLVVGSFLGLVVLWSSLT. Over 30 to 657 the chain is Lumenal; sequence PRPDDPSPLS…KWEMNNIHSV (628 aa). A disordered region spans residues 31 to 65; that stretch reads RPDDPSPLSRMREDRDVNDPMPNRGGNGLAPGEDR. Intrachain disulfides connect Cys197–Cys435, Cys426–Cys507, Cys545–Cys562, Cys585–Cys600, and Cys625–Cys640. Residues 206 to 317 form a catalytic subdomain A region; sequence LLTSSVVIVF…VNWYAPLVAP (112 aa). Substrate contacts are provided by Asp247 and Arg277. Mn(2+)-binding residues include Asp301 and His303. The tract at residues 381–443 is catalytic subdomain B; that stretch reads PYRSPAMAGG…PCSRVGHIYR (63 aa). Trp412 contacts substrate. Residue His440 participates in Mn(2+) binding. A substrate-binding site is contributed by Arg443. Residues 532 to 652 form the Ricin B-type lectin domain; that stretch reads VDWGEIRGFE…SKTTQKWEMN (121 aa).

Belongs to the glycosyltransferase 2 family. GalNAc-T subfamily. Mn(2+) is required as a cofactor. As to expression, widely expressed. Expressed in uterus, retina, kidney, small intestine, omentum, stomach and CNS.

It is found in the golgi apparatus membrane. It catalyses the reaction L-seryl-[protein] + UDP-N-acetyl-alpha-D-galactosamine = a 3-O-[N-acetyl-alpha-D-galactosaminyl]-L-seryl-[protein] + UDP + H(+). The enzyme catalyses L-threonyl-[protein] + UDP-N-acetyl-alpha-D-galactosamine = a 3-O-[N-acetyl-alpha-D-galactosaminyl]-L-threonyl-[protein] + UDP + H(+). It participates in protein modification; protein glycosylation. In terms of biological role, glycopeptide transferase involved in O-linked oligosaccharide biosynthesis, which catalyzes the transfer of an N-acetyl-D-galactosamine residue to an already glycosylated peptide. In contrast to other proteins of the family, it does not act as a peptide transferase that transfers GalNAc onto serine or threonine residue on the protein receptor, but instead requires the prior addition of a GalNAc on a peptide before adding additional GalNAc moieties. Some peptide transferase activity is however not excluded, considering that its appropriate peptide substrate may remain unidentified. This is N-acetylgalactosaminyltransferase 7 (GALNT7) from Homo sapiens (Human).